The chain runs to 459 residues: GTPase Der (459 aa).

EngA-type G domains lie at 3-169 and 183-358; these read PLVA…PPKE and IRLA…DQFR. GTP-binding positions include 9-16, 56-60, 119-122, 189-196, 236-240, and 301-304; these read GRPNVGKS, DTGGF, NKLD, DTAGI, and NKWD. Positions 359-442 constitute a KH-like domain; that stretch reads FRAPTPQLNR…PIRLIFKGRP (84 aa).

It belongs to the TRAFAC class TrmE-Era-EngA-EngB-Septin-like GTPase superfamily. EngA (Der) GTPase family. In terms of assembly, associates with the 50S ribosomal subunit.

Its function is as follows. GTPase that plays an essential role in the late steps of ribosome biogenesis. The chain is GTPase Der from Myxococcus xanthus (strain DK1622).